A 339-amino-acid polypeptide reads, in one-letter code: Ketol-acid reductoisomerase (NADP(+)) (339 aa).

Positions 1 to 182 (MRVYYDRDAD…GGGRAGIIET (182 aa)) constitute a KARI N-terminal Rossmann domain. NADP(+) contacts are provided by residues 24 to 27 (YGSQ), Arg48, Ser51, Ser53, and 83 to 86 (DELQ). The active site involves His108. Gly134 lines the NADP(+) pocket. The region spanning 183 to 328 (TFKEECETDL…AKLRDMMPWI (146 aa)) is the KARI C-terminal knotted domain. Residues Asp191, Glu195, Glu227, and Glu231 each coordinate Mg(2+). Ser252 contributes to the substrate binding site.

It belongs to the ketol-acid reductoisomerase family. Mg(2+) is required as a cofactor.

The enzyme catalyses (2R)-2,3-dihydroxy-3-methylbutanoate + NADP(+) = (2S)-2-acetolactate + NADPH + H(+). It catalyses the reaction (2R,3R)-2,3-dihydroxy-3-methylpentanoate + NADP(+) = (S)-2-ethyl-2-hydroxy-3-oxobutanoate + NADPH + H(+). Its pathway is amino-acid biosynthesis; L-isoleucine biosynthesis; L-isoleucine from 2-oxobutanoate: step 2/4. It participates in amino-acid biosynthesis; L-valine biosynthesis; L-valine from pyruvate: step 2/4. In terms of biological role, involved in the biosynthesis of branched-chain amino acids (BCAA). Catalyzes an alkyl-migration followed by a ketol-acid reduction of (S)-2-acetolactate (S2AL) to yield (R)-2,3-dihydroxy-isovalerate. In the isomerase reaction, S2AL is rearranged via a Mg-dependent methyl migration to produce 3-hydroxy-3-methyl-2-ketobutyrate (HMKB). In the reductase reaction, this 2-ketoacid undergoes a metal-dependent reduction by NADPH to yield (R)-2,3-dihydroxy-isovalerate. The sequence is that of Ketol-acid reductoisomerase (NADP(+)) from Bradyrhizobium diazoefficiens (strain JCM 10833 / BCRC 13528 / IAM 13628 / NBRC 14792 / USDA 110).